A 551-amino-acid chain; its full sequence is Cysteine desulfurase SufS (551 aa).

Positions methionine 1–serine 22 are cleaved as a signal peptide. Lysine 327 is modified (N6-(pyridoxal phosphate)lysine). Cysteine 500 serves as the catalytic Cysteine persulfide intermediate.

Belongs to the class-V pyridoxal-phosphate-dependent aminotransferase family. Csd subfamily. Monomer. Interacts with SufE; interaction enhances cysteine desulfurase activity of SufS. It depends on pyridoxal 5'-phosphate as a cofactor.

It localises to the plastid. The protein resides in the apicoplast. It catalyses the reaction (sulfur carrier)-H + L-cysteine = (sulfur carrier)-SH + L-alanine. The protein operates within cofactor biosynthesis; iron-sulfur cluster biosynthesis. Functionally, catalyzes sulfur activation and mobilization in sulfur mobilization (SUF) pathway for iron-sulfur (Fe-S) cluster biogenesis. Active when in complex with a partner protein SufE. Required for apicoplast maintenance. Plays a role in the development of sporozoites in oocysts in mosquitoes. This chain is Cysteine desulfurase SufS, found in Plasmodium vivax.